We begin with the raw amino-acid sequence, 98 residues long: Aspartyl/glutamyl-tRNA(Asn/Gln) amidotransferase subunit C (98 aa).

The disordered stretch occupies residues 75 to 98; it reads AQALSGAPAQEQQRFKVPQILGED.

Belongs to the GatC family. As to quaternary structure, heterotrimer of A, B and C subunits.

The catalysed reaction is L-glutamyl-tRNA(Gln) + L-glutamine + ATP + H2O = L-glutaminyl-tRNA(Gln) + L-glutamate + ADP + phosphate + H(+). The enzyme catalyses L-aspartyl-tRNA(Asn) + L-glutamine + ATP + H2O = L-asparaginyl-tRNA(Asn) + L-glutamate + ADP + phosphate + 2 H(+). Functionally, allows the formation of correctly charged Asn-tRNA(Asn) or Gln-tRNA(Gln) through the transamidation of misacylated Asp-tRNA(Asn) or Glu-tRNA(Gln) in organisms which lack either or both of asparaginyl-tRNA or glutaminyl-tRNA synthetases. The reaction takes place in the presence of glutamine and ATP through an activated phospho-Asp-tRNA(Asn) or phospho-Glu-tRNA(Gln). This is Aspartyl/glutamyl-tRNA(Asn/Gln) amidotransferase subunit C from Streptomyces griseus subsp. griseus (strain JCM 4626 / CBS 651.72 / NBRC 13350 / KCC S-0626 / ISP 5235).